A 369-amino-acid chain; its full sequence is Flagellar P-ring protein (369 aa).

The N-terminal stretch at 1-23 is a signal peptide; it reads MRIASFFTVLLTLLTLNITPASA.

Belongs to the FlgI family. As to quaternary structure, the basal body constitutes a major portion of the flagellar organelle and consists of four rings (L,P,S, and M) mounted on a central rod.

The protein resides in the periplasm. Its subcellular location is the bacterial flagellum basal body. Assembles around the rod to form the L-ring and probably protects the motor/basal body from shearing forces during rotation. The chain is Flagellar P-ring protein from Pectobacterium atrosepticum (strain SCRI 1043 / ATCC BAA-672) (Erwinia carotovora subsp. atroseptica).